Reading from the N-terminus, the 301-residue chain is Protein translocase subunit SecF (301 aa).

The next 6 helical transmembrane spans lie at 17–37 (YIAL…IFQI), 137–157 (DALF…AIRF), 163–183 (IGAT…FYIL), 190–210 (IFIS…VVVF), 239–261 (LSRT…FFGG), and 272–292 (ILGI…VVLL).

It belongs to the SecD/SecF family. SecF subfamily. Forms a complex with SecD. Part of the essential Sec protein translocation apparatus which comprises SecA, SecYEG and auxiliary proteins SecDF. Other proteins may also be involved.

It is found in the cell inner membrane. Its function is as follows. Part of the Sec protein translocase complex. Interacts with the SecYEG preprotein conducting channel. SecDF uses the proton motive force (PMF) to complete protein translocation after the ATP-dependent function of SecA. The chain is Protein translocase subunit SecF from Thermodesulfovibrio yellowstonii (strain ATCC 51303 / DSM 11347 / YP87).